The primary structure comprises 322 residues: ATP-dependent 6-phosphofructokinase (322 aa).

Position 11 (G11) interacts with ATP. 21-25 (RAVAR) provides a ligand contact to ADP. ATP-binding positions include 72–73 (RY) and 102–105 (GDGS). Position 103 (D103) interacts with Mg(2+). 125-127 (TID) contacts substrate. The active-site Proton acceptor is the D127. R154 serves as a coordination point for ADP. Residues R162 and 169–171 (MGR) contribute to the substrate site. ADP-binding positions include 185–187 (GAD) and 213–215 (KDY). Substrate is bound by residues E222, R246, and 252-255 (HVQR).

It belongs to the phosphofructokinase type A (PFKA) family. ATP-dependent PFK group I subfamily. Prokaryotic clade 'B1' sub-subfamily. As to quaternary structure, homotetramer. Mg(2+) serves as cofactor.

It is found in the cytoplasm. The catalysed reaction is beta-D-fructose 6-phosphate + ATP = beta-D-fructose 1,6-bisphosphate + ADP + H(+). The protein operates within carbohydrate degradation; glycolysis; D-glyceraldehyde 3-phosphate and glycerone phosphate from D-glucose: step 3/4. With respect to regulation, allosterically activated by ADP and other diphosphonucleosides, and allosterically inhibited by phosphoenolpyruvate. Catalyzes the phosphorylation of D-fructose 6-phosphate to fructose 1,6-bisphosphate by ATP, the first committing step of glycolysis. This is ATP-dependent 6-phosphofructokinase from Pediococcus pentosaceus (strain ATCC 25745 / CCUG 21536 / LMG 10740 / 183-1w).